The primary structure comprises 273 residues: 2,3,4,5-tetrahydropyridine-2,6-dicarboxylate N-succinyltransferase (273 aa).

Substrate-binding residues include arginine 104 and aspartate 141.

This sequence belongs to the transferase hexapeptide repeat family. As to quaternary structure, homotrimer.

Its subcellular location is the cytoplasm. The enzyme catalyses (S)-2,3,4,5-tetrahydrodipicolinate + succinyl-CoA + H2O = (S)-2-succinylamino-6-oxoheptanedioate + CoA. It functions in the pathway amino-acid biosynthesis; L-lysine biosynthesis via DAP pathway; LL-2,6-diaminopimelate from (S)-tetrahydrodipicolinate (succinylase route): step 1/3. This is 2,3,4,5-tetrahydropyridine-2,6-dicarboxylate N-succinyltransferase from Nitrosospira multiformis (strain ATCC 25196 / NCIMB 11849 / C 71).